Consider the following 704-residue polypeptide: Polyribonucleotide nucleotidyltransferase (704 aa).

Residues aspartate 487 and aspartate 493 each contribute to the Mg(2+) site. The KH domain occupies 554-613 (PRLLTIKIHPDKIREVIGKGGSTIQAITKETGTQIDIQDDGTIIIASVNAIAAQAAKSRI). The region spanning 623-691 (GRIYEGKVAK…KQGRIRLSIK (69 aa)) is the S1 motif domain.

This sequence belongs to the polyribonucleotide nucleotidyltransferase family. Component of the RNA degradosome, which is a multiprotein complex involved in RNA processing and mRNA degradation. Mg(2+) serves as cofactor.

Its subcellular location is the cytoplasm. It catalyses the reaction RNA(n+1) + phosphate = RNA(n) + a ribonucleoside 5'-diphosphate. Involved in mRNA degradation. Catalyzes the phosphorolysis of single-stranded polyribonucleotides processively in the 3'- to 5'-direction. In Xanthomonas oryzae pv. oryzae (strain MAFF 311018), this protein is Polyribonucleotide nucleotidyltransferase.